The following is a 906-amino-acid chain: Catenin alpha-2 (906 aa).

Residues 866–880 (KKPLVKREKPEEYQT) show a composition bias toward basic and acidic residues. The disordered stretch occupies residues 866–892 (KKPLVKREKPEEYQTRVRRGSQKKHIS). Positions 881–891 (RVRRGSQKKHI) are enriched in basic residues.

Belongs to the vinculin/alpha-catenin family. Interacts with CDH1 and CDH2. Mainly in the nervous system (at protein level).

Its subcellular location is the cell membrane. The protein resides in the cytoplasm. The protein localises to the cytoskeleton. It is found in the cell junction. It localises to the adherens junction. Its subcellular location is the cell projection. The protein resides in the axon. The protein localises to the nucleus. Functionally, may function as a linker between cadherin adhesion receptors and the cytoskeleton to regulate cell-cell adhesion and differentiation in the nervous system. The polypeptide is Catenin alpha-2 (CTNNA2) (Gallus gallus (Chicken)).